The chain runs to 138 residues: Cysteine desulfuration protein SufE (138 aa).

C51 functions as the Cysteine persulfide intermediate in the catalytic mechanism.

The protein belongs to the SufE family. Homodimer. Interacts with SufS.

It localises to the cytoplasm. The protein operates within cofactor biosynthesis; iron-sulfur cluster biosynthesis. In terms of biological role, participates in cysteine desulfuration mediated by SufS. Cysteine desulfuration mobilizes sulfur from L-cysteine to yield L-alanine and constitutes an essential step in sulfur metabolism for biosynthesis of a variety of sulfur-containing biomolecules. Functions as a sulfur acceptor for SufS, by mediating the direct transfer of the sulfur atom from the S-sulfanylcysteine of SufS, an intermediate product of cysteine desulfuration process. This chain is Cysteine desulfuration protein SufE, found in Escherichia fergusonii (strain ATCC 35469 / DSM 13698 / CCUG 18766 / IAM 14443 / JCM 21226 / LMG 7866 / NBRC 102419 / NCTC 12128 / CDC 0568-73).